Here is a 432-residue protein sequence, read N- to C-terminus: Amino-acid acetyltransferase (432 aa).

The 140-residue stretch at 286 to 425 (EQLREAGIED…ASLYNFQRNS (140 aa)) folds into the N-acetyltransferase domain.

This sequence belongs to the acetyltransferase family. ArgA subfamily.

Its subcellular location is the cytoplasm. The enzyme catalyses L-glutamate + acetyl-CoA = N-acetyl-L-glutamate + CoA + H(+). Its pathway is amino-acid biosynthesis; L-arginine biosynthesis; N(2)-acetyl-L-ornithine from L-glutamate: step 1/4. The protein is Amino-acid acetyltransferase of Pseudomonas aeruginosa (strain LESB58).